Consider the following 157-residue polypeptide: Endoribonuclease YbeY (157 aa).

3 residues coordinate Zn(2+): histidine 115, histidine 119, and histidine 125.

Belongs to the endoribonuclease YbeY family. It depends on Zn(2+) as a cofactor.

The protein resides in the cytoplasm. Single strand-specific metallo-endoribonuclease involved in late-stage 70S ribosome quality control and in maturation of the 3' terminus of the 16S rRNA. The sequence is that of Endoribonuclease YbeY from Micrococcus luteus (strain ATCC 4698 / DSM 20030 / JCM 1464 / CCM 169 / CCUG 5858 / IAM 1056 / NBRC 3333 / NCIMB 9278 / NCTC 2665 / VKM Ac-2230) (Micrococcus lysodeikticus).